Consider the following 421-residue polypeptide: Gamma-glutamyl phosphate reductase (421 aa).

The protein belongs to the gamma-glutamyl phosphate reductase family.

It localises to the cytoplasm. It catalyses the reaction L-glutamate 5-semialdehyde + phosphate + NADP(+) = L-glutamyl 5-phosphate + NADPH + H(+). Its pathway is amino-acid biosynthesis; L-proline biosynthesis; L-glutamate 5-semialdehyde from L-glutamate: step 2/2. In terms of biological role, catalyzes the NADPH-dependent reduction of L-glutamate 5-phosphate into L-glutamate 5-semialdehyde and phosphate. The product spontaneously undergoes cyclization to form 1-pyrroline-5-carboxylate. The polypeptide is Gamma-glutamyl phosphate reductase (Leifsonia xyli subsp. xyli (strain CTCB07)).